A 1152-amino-acid chain; its full sequence is MSLTDQKPRIERFGEITEVIPLPNLTEVQVNSFKAFLQADKAPDERDDTGLQSAFREVFPIDETEKGRSTGLVLDFLEYRLGEPPYTPEECREKDLTYQAPLYAKLQLIHKDSGLIKEDQVFLGDLPLMTDDGSFVINGADRVVISQIHRSPGVYFTSSYKGIKKMYTAAIIPMPKRGPWIELEFNGGVLEMKVNKRKFPVSLLLRVLGYDDAQLKALFTEFDPAAELPEDKSAGMNPDEALLRLFTVLRPGDPPKRDKAIQYLYGLLADPKRYDLGEPGRFKMNTKLGTRRQDRTLLTFEDGRFGDAGLVDTIRYLMALQQGLETVTMGADEDGVAIEVPVTEDDIDHLGNRRVRTVGELLADQLRVGMGRMARGVRERMLLGNPDAATPTKLVNNRPIVAAMREFFGRSQLSQFKDQTNPLSDLRHKRRISALGPGGLTRERAGFDVRDVHRTHYGRICPIETPEGANIGLISSLSSYAKVNDLGFIEAPYRRVVDGRVTDDVVYMTADIEDRYVIAQANSPLNPDGTFAEERVLARKKGDPMLYAPTEVDFMDVSPKQIVSINTSLIPFLEHDDANRALMGSNMQSQAVPLVRADSPAVGTGVEERVVTDSGTSVISDVTGRVTYVDARAIQVTLTEDAPQIGLVKGNVRTFELVRFTRSNQGTNLDQHPIVSVGDEVVPGQVIADGPASDQGRLALGQNITIAIMPFDGFNFEDAICISEGLVRKDFYTSVHIEKDEIEARDTKLGPEKITRDIPGLSEAALRDLDEDGIVRVGAEVKPGDILVGKTSFKGESEPTPEERLLRSIFGEKAREVKDTSLRVQSGQGGIVVKTVRFRRGDEGVDLKPGVREMVRVYVAQKRQLQVGDKVANRHGNKGVVSKILPPEDMPYLEDGTPVDLVFNPLGVPSRMNLGQILETHLGEVARLTGQKFVTPVFDSATEEAIKEMLEVAAAERLQRRKDEGFELDKREQEVLDRAGKLGVISPPNGDYAAAQMQLARTGKSVLYDGRTGEPISGPVVVGTMYVMKLYHMVEDKLHARSTGPYSLITQQPLGGKAQFGGQRFGEMEVWALEAYGAAHTLQEMLTIKSDDIDGRDAAYQSIVKGEEVSGSTIPESFKVLVKELHSLGLDVEVLDNNDKPVDIFEGMMPKR.

It belongs to the RNA polymerase beta chain family. The RNAP catalytic core consists of 2 alpha, 1 beta, 1 beta' and 1 omega subunit. When a sigma factor is associated with the core the holoenzyme is formed, which can initiate transcription.

The enzyme catalyses RNA(n) + a ribonucleoside 5'-triphosphate = RNA(n+1) + diphosphate. Functionally, DNA-dependent RNA polymerase catalyzes the transcription of DNA into RNA using the four ribonucleoside triphosphates as substrates. This is DNA-directed RNA polymerase subunit beta from Deinococcus geothermalis (strain DSM 11300 / CIP 105573 / AG-3a).